A 193-amino-acid chain; its full sequence is Ion-translocating oxidoreductase complex subunit A (193 aa).

6 helical membrane-spanning segments follow: residues 5-25 (LLLFVGTVLVNNFVLVKFLGL), 39-59 (IGMGLATTFVLTLASVCAWMV), 62-82 (FILLPLGLIYLRTLAFILVIA), 102-122 (LLGIFLPLITTNCAVLGVALL), 134-154 (AVYGFSAAAGFSLVMVLFAAI), and 171-191 (SIALITAGLMSLAFMGFTGLV).

The protein belongs to the NqrDE/RnfAE family. In terms of assembly, the complex is composed of six subunits: RnfA, RnfB, RnfC, RnfD, RnfE and RnfG.

The protein resides in the cell inner membrane. Part of a membrane-bound complex that couples electron transfer with translocation of ions across the membrane. This Yersinia pestis (strain Pestoides F) protein is Ion-translocating oxidoreductase complex subunit A.